Consider the following 707-residue polypeptide: Ribosomal RNA large subunit methyltransferase K/L (707 aa).

Positions 44–155 (VIYNLCLWSR…NDILTVSFDL (112 aa)) constitute a THUMP domain.

It belongs to the methyltransferase superfamily. RlmKL family.

The protein localises to the cytoplasm. It catalyses the reaction guanosine(2445) in 23S rRNA + S-adenosyl-L-methionine = N(2)-methylguanosine(2445) in 23S rRNA + S-adenosyl-L-homocysteine + H(+). The catalysed reaction is guanosine(2069) in 23S rRNA + S-adenosyl-L-methionine = N(2)-methylguanosine(2069) in 23S rRNA + S-adenosyl-L-homocysteine + H(+). Specifically methylates the guanine in position 2445 (m2G2445) and the guanine in position 2069 (m7G2069) of 23S rRNA. This chain is Ribosomal RNA large subunit methyltransferase K/L, found in Legionella pneumophila (strain Corby).